Consider the following 299-residue polypeptide: GTPase Era (299 aa).

The Era-type G domain maps to 9 to 177 (RSGSVAVIGR…VGDLLKLVPE (169 aa)). Residues 17 to 24 (GRPNVGKS) form a G1 region. A GTP-binding site is contributed by 17–24 (GRPNVGKS). The segment at 43 to 47 (QTTRH) is G2. The interval 64–67 (DTPG) is G3. GTP-binding positions include 64–68 (DTPGL) and 126–129 (NKVD). A G4 region spans residues 126–129 (NKVD). Residues 156 to 158 (VSA) form a G5 region. The KH type-2 domain maps to 200 to 284 (VREQLMRQLG…FLETWVRVRE (85 aa)).

This sequence belongs to the TRAFAC class TrmE-Era-EngA-EngB-Septin-like GTPase superfamily. Era GTPase family. In terms of assembly, monomer.

It is found in the cytoplasm. The protein resides in the cell inner membrane. Its function is as follows. An essential GTPase that binds both GDP and GTP, with rapid nucleotide exchange. Plays a role in 16S rRNA processing and 30S ribosomal subunit biogenesis and possibly also in cell cycle regulation and energy metabolism. This Xanthomonas axonopodis pv. citri (strain 306) protein is GTPase Era.